We begin with the raw amino-acid sequence, 614 residues long: Protein B602L (614 aa).

31 consecutive repeat copies span residues 161-164, 165-168, 169-172, 173-176, 177-180, 181-184, 185-188, 189-192, 193-196, 197-200, 201-204, 205-208, 209-212, 213-216, 217-220, 221-224, 225-228, 229-232, 233-236, 237-240, 241-244, 245-248, 249-252, 253-256, 257-260, 261-264, 265-268, 269-272, 273-276, 277-280, and 281-284. The interval 161-284 is 28 X 4 AA tandem repeats of [CNS]-[AV]-[DNS]-[IT]; sequence CASTNADTSA…DINANINANT (124 aa).

Belongs to the asfivirus B602L family.

It is found in the host cytoplasm. In terms of biological role, plays an essential role in the assembly of the icosahedral capsid of the virus. Allows the assembly of 3 molecules of hexon protein p72 and formation of a thermostable trimer. This African swine fever virus (isolate Tick/Malawi/Lil 20-1/1983) (ASFV) protein is Protein B602L.